Consider the following 513-residue polypeptide: Noroxomaritidine synthase 1 (513 aa).

A helical membrane pass occupies residues 18-34; the sequence is ILIAIACLVVFSLLRSA. Residue Cys458 coordinates heme.

Belongs to the cytochrome P450 family. Requires heme as cofactor. As to expression, mostly expressed in stems, and, to a lower extent, in bulbs, roots, leaves and flowers.

The protein localises to the membrane. It carries out the reaction 4'-O-methylnorbelladine + reduced [NADPH--hemoprotein reductase] + O2 = (10bR,4aS)-noroxomaritidine + oxidized [NADPH--hemoprotein reductase] + 2 H2O + H(+). The enzyme catalyses 4'-O-methylnorbelladine + reduced [NADPH--hemoprotein reductase] + O2 = (10bS,4aR)-noroxomaritidine + oxidized [NADPH--hemoprotein reductase] + 2 H2O + H(+). Its pathway is alkaloid biosynthesis. Cytochrome P450 that catalyzes an intramolecular para-para' C-C phenol coupling of 4'-O-methylnorbelladine in alkaloids biosynthesis, including haemanthamine- and crinamine-type alkaloids, promising anticancer agents. Catalyzes the formation of (10bR,4aS)-noroxomaritidine and (10bS,4aR)-noroxomaritidine from 4'-O-methylnorbelladine. The chain is Noroxomaritidine synthase 1 from Narcissus pseudonarcissus (Daffodil).